A 255-amino-acid chain; its full sequence is DNA repair protein RecO (255 aa).

It belongs to the RecO family.

Functionally, involved in DNA repair and RecF pathway recombination. The polypeptide is DNA repair protein RecO (Listeria welshimeri serovar 6b (strain ATCC 35897 / DSM 20650 / CCUG 15529 / CIP 8149 / NCTC 11857 / SLCC 5334 / V8)).